The chain runs to 640 residues: Phosphatidylinositol-binding clathrin assembly protein (640 aa).

Serine 2 carries the N-acetylserine modification. In terms of domain architecture, ENTH spans 14–145; sequence QHSVTGSAVS…VSYRQVAFDF (132 aa). Residues serine 16 and serine 20 each carry the phosphoserine modification. The tract at residues 221–294 is interaction with PIMREG; that stretch reads KYFDMKKNQC…LEGKKIKDST (74 aa). Lysine 238 is covalently cross-linked (Glycyl lysine isopeptide (Lys-Gly) (interchain with G-Cter in SUMO2)). Phosphoserine occurs at positions 303 and 315. Residues 543 to 568 form a disordered region; that stretch reads NGTTKNDVSCSQPGEKKLTGGSNWQP. A compositionally biased stretch (polar residues) spans 544-554; sequence GTTKNDVSCSQ.

Belongs to the PICALM/SNAP91 family. As to quaternary structure, binds to clathrin; involves primarily the C-terminal sequences, but the full-length protein is required for full binding capacity. Binds phosphatidylinositol 4,5- bisphosphate. Interacts with PIMREG; this interaction may change the subcellular location into the nucleus. Interacts with AP2A1 (via its alpha-appendage domain). Interacts (via N-terminus) with VAMP2; VAMP3; VAMP7 and VAMP8 (Via N-terminus). Interacts with LC3/MAP1LC3A. Isoform 2 was found in most tissues examined. Isoform 1 has an overlapping expression pattern but is absent from lung, heart and pancreas. Both isoforms are widely expressed in the brain, higher levels are seen in hippocampus, dentate gyrus, medial habenula nucleus and cerebellar granule cells.

It is found in the cell membrane. The protein localises to the membrane. Its subcellular location is the clathrin-coated pit. The protein resides in the golgi apparatus. It localises to the cytoplasmic vesicle. It is found in the clathrin-coated vesicle. The protein localises to the nucleus. Its function is as follows. Cytoplasmic adapter protein that plays a critical role in clathrin-mediated endocytosis which is important in processes such as internalization of cell receptors, synaptic transmission or removal of apoptotic cells. Recruits AP-2 and attaches clathrin triskelions to the cytoplasmic side of plasma membrane leading to clathrin-coated vesicles (CCVs) assembly. Furthermore, regulates clathrin-coated vesicle size and maturation by directly sensing and driving membrane curvature. In addition to binding to clathrin, mediates the endocytosis of small R-SNARES (Soluble NSF Attachment Protein REceptors) between plasma membranes and endosomes including VAMP2, VAMP3, VAMP4, VAMP7 or VAMP8. In turn, PICALM-dependent SNARE endocytosis is required for the formation and maturation of autophagic precursors. Modulates thereby autophagy and the turnover of autophagy substrates such as MAPT/TAU or amyloid precursor protein cleaved C-terminal fragment (APP-CTF). The chain is Phosphatidylinositol-binding clathrin assembly protein (Picalm) from Rattus norvegicus (Rat).